We begin with the raw amino-acid sequence, 158 residues long: U-limacoditoxin(8)-Dv66 (158 aa).

The first 24 residues, 1-24 (MALRAPWIALCCVLAVLFVVPAAT), serve as a signal peptide directing secretion. Positions 25 to 32 (RDEERQKR) are excised as a propeptide. 2 repeat units span residues 33–78 (GVDF…RQKR) and 79–124 (GVDF…RQKR). A 3 X 46 AA tandem repeats region spans residues 33 to 158 (GVDFGLQRGF…AQDPHGPGRK (126 aa)). Position 63 is a proline amide (Pro63). Residues 64 to 78 (GRKRRDAYEMERQKR) constitute a propeptide that is removed on maturation. Residues 101–120 (ARAQDPHGPGRKRRDAYEME) form a disordered region. Proline amide is present on Pro109. A propeptide spanning residues 110–124 (GRKRRDAYEMERQKR) is cleaved from the precursor. A 3; half-length repeat occupies 125-158 (GVDFGLQRGFSGSELAKLKLALARAQDPHGPGRK). Pro155 bears the Proline amide mark.

The protein belongs to the diuretic hormone class 2 family. Expressed by the venom secretory cell of the spine. The spine is a cuticular structure containing a single large nucleated venom-secreting cell at its base. It is an independent unit capable of producing, storing and injecting venom. On the back of D.vulnerans caterpillars, spines are grouped together by 50 to 100 to form scoli, of which there are eight in D.vulnerans.

The protein resides in the secreted. Probable toxin. Does not show insecticidal, antimicrobial and antiparasitic activities. Does not induce increase in intracellular calcium in mouse DRG neurons, suggesting that it does not induce pain. The sequence is that of U-limacoditoxin(8)-Dv66 from Doratifera vulnerans (Mottled cup moth).